We begin with the raw amino-acid sequence, 305 residues long: NADH-cytochrome b5 reductase 1 (305 aa).

A helical transmembrane segment spans residues 8–28 (VLLASLGVGLVTLLGLAVGSY). Residues 44-156 (NEKYLLRLLD…RGPSGLLTYT (113 aa)) form the FAD-binding FR-type domain. FAD is bound by residues 136 to 166 (DSLKVGDVVEFRGPSGLLTYTGKGHFNIQPN) and 175 to 210 (VAKKLGMIAGGTGITPMLQLIRAILKVPEDPTQCFL).

This sequence belongs to the flavoprotein pyridine nucleotide cytochrome reductase family. FAD serves as cofactor. As to expression, widely expressed.

Its subcellular location is the membrane. It carries out the reaction 2 Fe(III)-[cytochrome b5] + NADH = 2 Fe(II)-[cytochrome b5] + NAD(+) + H(+). NADH-cytochrome b5 reductases are involved in desaturation and elongation of fatty acids, cholesterol biosynthesis, drug metabolism, and, in erythrocyte, methemoglobin reduction. This is NADH-cytochrome b5 reductase 1 (CYB5R1) from Homo sapiens (Human).